The sequence spans 626 residues: 4-hydroxy-3-methylbut-2-en-1-yl diphosphate synthase (flavodoxin) (626 aa).

The [4Fe-4S] cluster site is built by cysteine 521, cysteine 524, cysteine 555, and glutamate 562.

This sequence belongs to the IspG family. [4Fe-4S] cluster serves as cofactor.

It catalyses the reaction (2E)-4-hydroxy-3-methylbut-2-enyl diphosphate + oxidized [flavodoxin] + H2O + 2 H(+) = 2-C-methyl-D-erythritol 2,4-cyclic diphosphate + reduced [flavodoxin]. Its pathway is isoprenoid biosynthesis; isopentenyl diphosphate biosynthesis via DXP pathway; isopentenyl diphosphate from 1-deoxy-D-xylulose 5-phosphate: step 5/6. In terms of biological role, converts 2C-methyl-D-erythritol 2,4-cyclodiphosphate (ME-2,4cPP) into 1-hydroxy-2-methyl-2-(E)-butenyl 4-diphosphate. The polypeptide is 4-hydroxy-3-methylbut-2-en-1-yl diphosphate synthase (flavodoxin) (Bacteroides fragilis (strain YCH46)).